A 196-amino-acid chain; its full sequence is uncharacterized protein (196 aa).

This is an uncharacterized protein from Acanthamoeba polyphaga mimivirus (APMV).